The sequence spans 89 residues: HssA/B-like protein 22 (89 aa).

This sequence belongs to the hssA/B family.

This chain is HssA/B-like protein 22 (hssl22), found in Dictyostelium discoideum (Social amoeba).